Here is a 401-residue protein sequence, read N- to C-terminus: Chorismate synthase (401 aa).

NADP(+) contacts are provided by R40 and R46. FMN is bound by residues R135–S137, Q256–A257, G300, K315–T319, and R341.

It belongs to the chorismate synthase family. Homotetramer. The cofactor is FMNH2.

The enzyme catalyses 5-O-(1-carboxyvinyl)-3-phosphoshikimate = chorismate + phosphate. The protein operates within metabolic intermediate biosynthesis; chorismate biosynthesis; chorismate from D-erythrose 4-phosphate and phosphoenolpyruvate: step 7/7. In terms of biological role, catalyzes the anti-1,4-elimination of the C-3 phosphate and the C-6 proR hydrogen from 5-enolpyruvylshikimate-3-phosphate (EPSP) to yield chorismate, which is the branch point compound that serves as the starting substrate for the three terminal pathways of aromatic amino acid biosynthesis. This reaction introduces a second double bond into the aromatic ring system. The polypeptide is Chorismate synthase (Mycobacterium bovis (strain BCG / Pasteur 1173P2)).